Here is a 157-residue protein sequence, read N- to C-terminus: 2-C-methyl-D-erythritol 2,4-cyclodiphosphate synthase (157 aa).

A divalent metal cation contacts are provided by aspartate 8 and histidine 10. 4-CDP-2-C-methyl-D-erythritol 2-phosphate-binding positions include 8-10 (DVH) and 34-35 (HS). Histidine 42 lines the a divalent metal cation pocket. 4-CDP-2-C-methyl-D-erythritol 2-phosphate contacts are provided by residues 56–58 (DIG), 61–65 (FPDTD), 100–106 (AQKPKMA), 132–135 (TTEE), and phenylalanine 139.

The protein belongs to the IspF family. Homotrimer. The cofactor is a divalent metal cation.

The catalysed reaction is 4-CDP-2-C-methyl-D-erythritol 2-phosphate = 2-C-methyl-D-erythritol 2,4-cyclic diphosphate + CMP. Its pathway is isoprenoid biosynthesis; isopentenyl diphosphate biosynthesis via DXP pathway; isopentenyl diphosphate from 1-deoxy-D-xylulose 5-phosphate: step 4/6. Involved in the biosynthesis of isopentenyl diphosphate (IPP) and dimethylallyl diphosphate (DMAPP), two major building blocks of isoprenoid compounds. Catalyzes the conversion of 4-diphosphocytidyl-2-C-methyl-D-erythritol 2-phosphate (CDP-ME2P) to 2-C-methyl-D-erythritol 2,4-cyclodiphosphate (ME-CPP) with a corresponding release of cytidine 5-monophosphate (CMP). The protein is 2-C-methyl-D-erythritol 2,4-cyclodiphosphate synthase of Clostridium novyi (strain NT).